The chain runs to 79 residues: ESX secretion system protein YukD (79 aa).

The protein belongs to the EsaB family.

In terms of biological role, required for YukE secretion. Probable component or regulator of the ESX/ESAT-6-like secretion system (BsEss). The polypeptide is ESX secretion system protein YukD (yukD) (Bacillus subtilis (strain 168)).